Here is a 360-residue protein sequence, read N- to C-terminus: Probable dual-specificity RNA methyltransferase RlmN (360 aa).

The active-site Proton acceptor is Glu-91. Residues 97-335 (QHYGQSVCVT…CVVRQEHGTD (239 aa)) form the Radical SAM core domain. Cys-104 and Cys-340 are disulfide-bonded. Cys-111, Cys-115, and Cys-118 together coordinate [4Fe-4S] cluster. S-adenosyl-L-methionine-binding positions include 163–164 (GE), Ser-195, 218–220 (SLH), and Asn-296. The S-methylcysteine intermediate role is filled by Cys-340.

Belongs to the radical SAM superfamily. RlmN family. Requires [4Fe-4S] cluster as cofactor.

It is found in the cytoplasm. The enzyme catalyses adenosine(2503) in 23S rRNA + 2 reduced [2Fe-2S]-[ferredoxin] + 2 S-adenosyl-L-methionine = 2-methyladenosine(2503) in 23S rRNA + 5'-deoxyadenosine + L-methionine + 2 oxidized [2Fe-2S]-[ferredoxin] + S-adenosyl-L-homocysteine. The catalysed reaction is adenosine(37) in tRNA + 2 reduced [2Fe-2S]-[ferredoxin] + 2 S-adenosyl-L-methionine = 2-methyladenosine(37) in tRNA + 5'-deoxyadenosine + L-methionine + 2 oxidized [2Fe-2S]-[ferredoxin] + S-adenosyl-L-homocysteine. Specifically methylates position 2 of adenine 2503 in 23S rRNA and position 2 of adenine 37 in tRNAs. The sequence is that of Probable dual-specificity RNA methyltransferase RlmN from Streptococcus equi subsp. zooepidemicus (strain H70).